A 650-amino-acid polypeptide reads, in one-letter code: Putative F-box protein R757 (650 aa).

The region spanning 7 to 53 (FSVMESLPTELAYHVLSFIDFNSVVTYRLCSQESNNFIKSMLVFFPI) is the F-box domain.

This Acanthamoeba polyphaga mimivirus (APMV) protein is Putative F-box protein R757.